The primary structure comprises 387 residues: F-box only protein 4 (387 aa).

Residues serine 12 and serine 48 each carry the phosphoserine modification. The region spanning 56–102 is the F-box domain; sequence ASTLTRLPIDVQLYILSFLSPHDLCQLGSTNHYWNETVRDPILWRYF.

In terms of assembly, homodimer. Part of the SCF (SKP1-CUL1-F-box) E3 ubiquitin-protein ligase complex SCF(FBXO4) formed of CUL1, SKP1, RBX1 and FBXO4. Interacts with TERF1; this interaction is prevented in the presence of GNL3L. Identified in a complex with CRYAB and CCND1. In terms of processing, phosphorylation at Ser-12 varies during the cell cycle. It is low in resting cells and high in the S phase and the G2/M phase of the cell cycle. Phosphorylation is decreased during late G1 phase. Phosphorylation at Ser-12 promotes homodimerization and is necessary for optimal ubiquitin ligase activity towards CCND1.

It is found in the cytoplasm. It participates in protein modification; protein ubiquitination. Its function is as follows. Substrate recognition component of a SCF (SKP1-CUL1-F-box protein) E3 ubiquitin-protein ligase complex that mediates the ubiquitination and subsequent proteasomal degradation of target proteins. Promotes ubiquitination of cyclin-D1 (CCND1) and its subsequent proteasomal degradation. However, it does not act as a major regulator of CCND1 stability during the G1/S transition. Recognizes TERF1 and promotes its ubiquitination together with UBE2D1. Promotes ubiquitination of FXR1 following phosphorylation of FXR1 by GSK3B, leading to FXR1 degradation by the proteasome. In Homo sapiens (Human), this protein is F-box only protein 4 (FBXO4).